The following is a 161-amino-acid chain: ATP synthase subunit b 1 (161 aa).

The chain crosses the membrane as a helical span at residues 6–26 (EFYVALGFVIFVAILLYYGVH).

Belongs to the ATPase B chain family. F-type ATPases have 2 components, F(1) - the catalytic core - and F(0) - the membrane proton channel. F(1) has five subunits: alpha(3), beta(3), gamma(1), delta(1), epsilon(1). F(0) has three main subunits: a(1), b(2) and c(10-14). The alpha and beta chains form an alternating ring which encloses part of the gamma chain. F(1) is attached to F(0) by a central stalk formed by the gamma and epsilon chains, while a peripheral stalk is formed by the delta and b chains.

Its subcellular location is the cell inner membrane. Functionally, f(1)F(0) ATP synthase produces ATP from ADP in the presence of a proton or sodium gradient. F-type ATPases consist of two structural domains, F(1) containing the extramembraneous catalytic core and F(0) containing the membrane proton channel, linked together by a central stalk and a peripheral stalk. During catalysis, ATP synthesis in the catalytic domain of F(1) is coupled via a rotary mechanism of the central stalk subunits to proton translocation. In terms of biological role, component of the F(0) channel, it forms part of the peripheral stalk, linking F(1) to F(0). The sequence is that of ATP synthase subunit b 1 from Beijerinckia indica subsp. indica (strain ATCC 9039 / DSM 1715 / NCIMB 8712).